The primary structure comprises 424 residues: Serine--tRNA ligase (424 aa).

231–233 (TAE) provides a ligand contact to L-serine. 261-263 (RSE) provides a ligand contact to ATP. E284 contributes to the L-serine binding site. An ATP-binding site is contributed by 348–351 (ETSS). Position 383 (S383) interacts with L-serine.

It belongs to the class-II aminoacyl-tRNA synthetase family. Type-1 seryl-tRNA synthetase subfamily. As to quaternary structure, homodimer. The tRNA molecule binds across the dimer.

The protein localises to the cytoplasm. The catalysed reaction is tRNA(Ser) + L-serine + ATP = L-seryl-tRNA(Ser) + AMP + diphosphate + H(+). It carries out the reaction tRNA(Sec) + L-serine + ATP = L-seryl-tRNA(Sec) + AMP + diphosphate + H(+). It participates in aminoacyl-tRNA biosynthesis; selenocysteinyl-tRNA(Sec) biosynthesis; L-seryl-tRNA(Sec) from L-serine and tRNA(Sec): step 1/1. Functionally, catalyzes the attachment of serine to tRNA(Ser). Is also able to aminoacylate tRNA(Sec) with serine, to form the misacylated tRNA L-seryl-tRNA(Sec), which will be further converted into selenocysteinyl-tRNA(Sec). This is Serine--tRNA ligase from Metamycoplasma arthritidis (strain 158L3-1) (Mycoplasma arthritidis).